A 667-amino-acid polypeptide reads, in one-letter code: UvrABC system protein B (667 aa).

The 172-residue stretch at 24–195 (EGLRRGDRFQ…SSGGVFHLRG (172 aa)) folds into the Helicase ATP-binding domain. Residue 37–44 (GVTGSGKT) coordinates ATP. A Beta-hairpin motif is present at residues 90–113 (YYDYYQPEAYIPTKDLYIEKDADI). A Helicase C-terminal domain is found at 428 to 581 (QVDDFIEEVQ…QLMYNIEHDI (154 aa)). The UVR domain maps to 626 to 661 (EEYLALLEEEMWRASSELRYEDAAMLRDEMLRIKRE).

It belongs to the UvrB family. As to quaternary structure, forms a heterotetramer with UvrA during the search for lesions. Interacts with UvrC in an incision complex.

The protein localises to the cytoplasm. Functionally, the UvrABC repair system catalyzes the recognition and processing of DNA lesions. A damage recognition complex composed of 2 UvrA and 2 UvrB subunits scans DNA for abnormalities. Upon binding of the UvrA(2)B(2) complex to a putative damaged site, the DNA wraps around one UvrB monomer. DNA wrap is dependent on ATP binding by UvrB and probably causes local melting of the DNA helix, facilitating insertion of UvrB beta-hairpin between the DNA strands. Then UvrB probes one DNA strand for the presence of a lesion. If a lesion is found the UvrA subunits dissociate and the UvrB-DNA preincision complex is formed. This complex is subsequently bound by UvrC and the second UvrB is released. If no lesion is found, the DNA wraps around the other UvrB subunit that will check the other stand for damage. The chain is UvrABC system protein B from Kosmotoga olearia (strain ATCC BAA-1733 / DSM 21960 / TBF 19.5.1).